Consider the following 342-residue polypeptide: Methyltransferase ungE' (342 aa).

This sequence belongs to the methyltransferase superfamily.

It functions in the pathway secondary metabolite biosynthesis. In terms of biological role, methyltransferase; part of the gene cluster that mediates the biosynthesis of the unguisins, gamma-aminobutyric acid (GABA)-containing fungal cyclic heptapeptides with the amino acid sequence cyclo-(D-Ala1-D-Val2-L-Leu3-beta-MePhe4-D-Ala5-D-Trp6-GABA7) for unguisin H and cyclo-(D-Ala1-D-Ala2-L-Leu3-beta-MePhe4-D-Ala5-D-Trp6-GABA7) for unguisin I. Within the pathway, the methyltransferase ungE' is probably involved in the synthesis of the (2R,3R)-beta-methylphenylalanine residue incorporated by the module 4 of the nonribosomal peptide synthetase (NRPS) ungA'. The alanine racemase ungC' catalyzes the interconversion of L-alanine and D-alanine, providing the D-alanine which is accepted by the first adenylation domain of ungA'. UngA' is the main enzyme within the cluster which condenses the 7 residues using its respective 7 modules. The terminal condensation domain (Ct) is involved in cyclization with D-alanine and thereby releasing of unguisins H and I. Finally, the hydrolase ungD' catalyzes the hydrolysis between the D-tryptophan and GABA residues of unguisins H and I to produce the corresponding linear peptides. This is Methyltransferase ungE' from Aspergillus campestris (strain IBT 28561).